Reading from the N-terminus, the 507-residue chain is Beta-Ala-His dipeptidase (507 aa).

Positions 1-26 are cleaved as a signal peptide; that stretch reads MDPKLGRMAASLLAVLLLLLERGMFS. His132 is a binding site for Zn(2+). Asp134 is a catalytic residue. Position 165 (Asp165) interacts with Zn(2+). Catalysis depends on Glu199, which acts as the Proton acceptor. Glu200 provides a ligand contact to Zn(2+). At Ser219 the chain carries Phosphoserine. Asp228 contacts Zn(2+). Asn322 and Asn382 each carry an N-linked (GlcNAc...) asparagine glycan. Position 478 (His478) interacts with Zn(2+).

Belongs to the peptidase M20A family. As to quaternary structure, homodimer. Zn(2+) serves as cofactor. As to expression, found in serum and adult nervous central system. Absent in serum from patients with homocarnosinosis.

It is found in the secreted. The catalysed reaction is Preferential hydrolysis of the beta-Ala-|-His dipeptide (carnosine), and also anserine, Xaa-|-His dipeptides and other dipeptides including homocarnosine.. It carries out the reaction carnosine + H2O = beta-alanine + L-histidine. It catalyses the reaction anserine + H2O = N(pros)-methyl-L-histidine + beta-alanine. The enzyme catalyses L-alanyl-L-histidine + H2O = L-histidine + L-alanine. The catalysed reaction is glycyl-L-histidine + H2O = L-histidine + glycine. It carries out the reaction L-homocarnosine + H2O = 4-aminobutanoate + L-histidine. Its activity is regulated as follows. Activated by cadmium ions. Inhibited by the metal chelator 1,10-o-phenantrolin. The inhibitory concentration 50% (IC(50)) is 5 uM. Its function is as follows. Catalyzes the peptide bond hydrolysis in Xaa-His dipeptides, displaying the highest activity toward carnosine (beta-alanyl-L-histidine) and anserine (beta-alanyl-3-methyl-histidine). In Homo sapiens (Human), this protein is Beta-Ala-His dipeptidase.